Reading from the N-terminus, the 170-residue chain is Probable peptide methionine sulfoxide reductase (170 aa).

The protein belongs to the MsrA Met sulfoxide reductase family.

It localises to the cytoplasm. The protein localises to the nucleus. The catalysed reaction is L-methionyl-[protein] + [thioredoxin]-disulfide + H2O = L-methionyl-(S)-S-oxide-[protein] + [thioredoxin]-dithiol. It carries out the reaction [thioredoxin]-disulfide + L-methionine + H2O = L-methionine (S)-S-oxide + [thioredoxin]-dithiol. Its function is as follows. Has an important function as a repair enzyme for proteins that have been inactivated by oxidation. Catalyzes the reversible oxidation-reduction of methionine sulfoxide in proteins to methionine. This is Probable peptide methionine sulfoxide reductase (mxr1) from Schizosaccharomyces pombe (strain 972 / ATCC 24843) (Fission yeast).